The chain runs to 120 residues: Large ribosomal subunit protein bL17 (120 aa).

This sequence belongs to the bacterial ribosomal protein bL17 family. As to quaternary structure, part of the 50S ribosomal subunit. Contacts protein L32.

The chain is Large ribosomal subunit protein bL17 from Mycoplasmopsis synoviae (strain 53) (Mycoplasma synoviae).